Consider the following 456-residue polypeptide: Bifunctional protein GlmU (456 aa).

Residues M1–R229 are pyrophosphorylase. Residues L11–G14, K25, Q76, G81–T82, Y103–D105, G140, E154, N169, and N227 each bind UDP-N-acetyl-alpha-D-glucosamine. D105 contributes to the Mg(2+) binding site. N227 lines the Mg(2+) pocket. Residues L230–A250 form a linker region. Positions G251 to K456 are N-acetyltransferase. The UDP-N-acetyl-alpha-D-glucosamine site is built by R333 and K351. H363 serves as the catalytic Proton acceptor. 2 residues coordinate UDP-N-acetyl-alpha-D-glucosamine: Y366 and N377. Acetyl-CoA-binding positions include A380, N386 to Y387, S405, A423, and R440.

The protein in the N-terminal section; belongs to the N-acetylglucosamine-1-phosphate uridyltransferase family. It in the C-terminal section; belongs to the transferase hexapeptide repeat family. In terms of assembly, homotrimer. The cofactor is Mg(2+).

It is found in the cytoplasm. It carries out the reaction alpha-D-glucosamine 1-phosphate + acetyl-CoA = N-acetyl-alpha-D-glucosamine 1-phosphate + CoA + H(+). The enzyme catalyses N-acetyl-alpha-D-glucosamine 1-phosphate + UTP + H(+) = UDP-N-acetyl-alpha-D-glucosamine + diphosphate. It functions in the pathway nucleotide-sugar biosynthesis; UDP-N-acetyl-alpha-D-glucosamine biosynthesis; N-acetyl-alpha-D-glucosamine 1-phosphate from alpha-D-glucosamine 6-phosphate (route II): step 2/2. It participates in nucleotide-sugar biosynthesis; UDP-N-acetyl-alpha-D-glucosamine biosynthesis; UDP-N-acetyl-alpha-D-glucosamine from N-acetyl-alpha-D-glucosamine 1-phosphate: step 1/1. Its pathway is bacterial outer membrane biogenesis; LPS lipid A biosynthesis. In terms of biological role, catalyzes the last two sequential reactions in the de novo biosynthetic pathway for UDP-N-acetylglucosamine (UDP-GlcNAc). The C-terminal domain catalyzes the transfer of acetyl group from acetyl coenzyme A to glucosamine-1-phosphate (GlcN-1-P) to produce N-acetylglucosamine-1-phosphate (GlcNAc-1-P), which is converted into UDP-GlcNAc by the transfer of uridine 5-monophosphate (from uridine 5-triphosphate), a reaction catalyzed by the N-terminal domain. This Serratia proteamaculans (strain 568) protein is Bifunctional protein GlmU.